A 281-amino-acid chain; its full sequence is MNIADGRQAFSAPAKLNLDLRITGRREDGYHNIESIFCLIDLQDTVYLKPRDDGKIILHNPVDGMPQEVDLSYRAASLLQKYARNPAGVEIWLDKKIPTGAGLGGGSSDAATVLLVLNRWWQCGLTQRQLIDSGAALGADVPFFIFGKNAFARGIGDRLDEMDIPKQWYVIVKPPVHVSTAKIFTHESLTRNSASSIMPTFQNLQPFRNDMQAVVFKEYPEVWKAYSELSRYGFALMTGSGACVFTACQDRNSAYNIYRQVSDLYEAYLAEGLSKHPLLSV.

Lys-15 is a catalytic residue. 98-108 (PTGAGLGGGSS) serves as a coordination point for ATP. Asp-140 is a catalytic residue.

This sequence belongs to the GHMP kinase family. IspE subfamily.

It catalyses the reaction 4-CDP-2-C-methyl-D-erythritol + ATP = 4-CDP-2-C-methyl-D-erythritol 2-phosphate + ADP + H(+). It participates in isoprenoid biosynthesis; isopentenyl diphosphate biosynthesis via DXP pathway; isopentenyl diphosphate from 1-deoxy-D-xylulose 5-phosphate: step 3/6. Catalyzes the phosphorylation of the position 2 hydroxy group of 4-diphosphocytidyl-2C-methyl-D-erythritol. The protein is 4-diphosphocytidyl-2-C-methyl-D-erythritol kinase of Neisseria meningitidis serogroup B (strain ATCC BAA-335 / MC58).